The sequence spans 322 residues: MKRIGIMTSGGDAPGMNLAIRAVARKALSSGLEAYGINYGFAGLVAGDIHEFKAADLDDMVSQGGTMLYSARYPEFAQEESQLKGIEQLKKFGIDALVVIGGDGSYHGALRLTEHGYNTIGLPGTIDNDIPFTDFTIGFDTALNTAVDAIDKIRDTAKSHQRVFAVQVMGRNAADIALWAGVASGADAVIAPGFDYDVEAIANKLKKNRANGKDYGIIVIAEGDANSDAAPEFIDQLKQYGDFDARATVIGHVQRGGVPSAKDRVLASKMGAYAVELLLEGKGGLAVGILENKVQAHNMLDLFDAKHQADDSLYQLSEDLSF.

Gly11 serves as a coordination point for ATP. Residue 21-25 participates in ADP binding; sequence RAVAR. ATP is bound by residues 72-73 and 102-105; these read RY and GDGS. Asp103 is a binding site for Mg(2+). 125-127 contributes to the substrate binding site; the sequence is TID. Asp127 functions as the Proton acceptor in the catalytic mechanism. Arg154 lines the ADP pocket. Substrate contacts are provided by residues Arg162 and 169–171; that span reads MGR. ADP is bound by residues 185 to 187 and 213 to 215; these read GAD and KDY. Substrate is bound by residues Glu222, Arg246, and 252-255; that span reads HVQR.

It belongs to the phosphofructokinase type A (PFKA) family. ATP-dependent PFK group I subfamily. Prokaryotic clade 'B1' sub-subfamily. Homotetramer. Mg(2+) serves as cofactor.

It localises to the cytoplasm. The enzyme catalyses beta-D-fructose 6-phosphate + ATP = beta-D-fructose 1,6-bisphosphate + ADP + H(+). It functions in the pathway carbohydrate degradation; glycolysis; D-glyceraldehyde 3-phosphate and glycerone phosphate from D-glucose: step 3/4. Allosterically activated by ADP and other diphosphonucleosides, and allosterically inhibited by phosphoenolpyruvate. Catalyzes the phosphorylation of D-fructose 6-phosphate to fructose 1,6-bisphosphate by ATP, the first committing step of glycolysis. The polypeptide is ATP-dependent 6-phosphofructokinase (Pediococcus pentosaceus (strain ATCC 25745 / CCUG 21536 / LMG 10740 / 183-1w)).